A 174-amino-acid polypeptide reads, in one-letter code: ATP-dependent protease subunit HslV (174 aa).

Thr2 is an active-site residue. Residues Gly159, Asp162, and Thr165 each coordinate Na(+).

Belongs to the peptidase T1B family. HslV subfamily. A double ring-shaped homohexamer of HslV is capped on each side by a ring-shaped HslU homohexamer. The assembly of the HslU/HslV complex is dependent on binding of ATP.

Its subcellular location is the cytoplasm. It catalyses the reaction ATP-dependent cleavage of peptide bonds with broad specificity.. Its activity is regulated as follows. Allosterically activated by HslU binding. Its function is as follows. Protease subunit of a proteasome-like degradation complex believed to be a general protein degrading machinery. This is ATP-dependent protease subunit HslV from Lacticaseibacillus casei (strain BL23) (Lactobacillus casei).